Here is a 476-residue protein sequence, read N- to C-terminus: Inner membrane transporter YcaM (476 aa).

Residues 1-9 lie on the Cytoplasmic side of the membrane; it reads MAGNVQEKQ. Residues 10-30 traverse the membrane as a helical segment; sequence LRWYNIALMSFITVWGFGNVV. Residues 31–38 are Periplasmic-facing; it reads NNYANQGL. A helical transmembrane segment spans residues 39–59; sequence VVVFSWVFIFALYFTPYALIV. Residues 60-80 lie on the Cytoplasmic side of the membrane; the sequence is GQLGSTFKDGKGGVSTWIKHT. A helical membrane pass occupies residues 81–101; sequence MGPGLAYLAAWTYWVVHIPYL. Residues 102-125 lie on the Periplasmic side of the membrane; it reads AQKPQAILIALGWAMKGDGSLIKE. Residues 126–146 traverse the membrane as a helical segment; the sequence is YSVVALQGLTLVLFIFFMWVA. Residues 147 to 154 are Cytoplasmic-facing; it reads SRGMKSLK. A helical transmembrane segment spans residues 155–175; that stretch reads IVGSVAGIAMFVMSLLYVAMA. The Periplasmic portion of the chain corresponds to 176-195; it reads VTAPAITEVHIATTNITWET. The chain crosses the membrane as a helical span at residues 196 to 216; that stretch reads FIPHIDFTYITTISMLVFAVG. Residues 217 to 240 are Cytoplasmic-facing; that stretch reads GAEKISPYVNQTRNPGKEFPKGML. Residues 241–261 traverse the membrane as a helical segment; sequence CLAVMVAVCAILGSLAMGMMF. The Periplasmic portion of the chain corresponds to 262–291; it reads DSRNIPDDLMTNGQYYAFQKLGEYYNMGNT. Residues 292 to 312 traverse the membrane as a helical segment; sequence LMVIYAIANTLGQVAALVFSI. The Cytoplasmic segment spans residues 313–343; the sequence is DAPLKVLLGDADSKYIPASLCRTNASGTPVN. A helical transmembrane segment spans residues 344 to 364; sequence GYFLTLVLVAILIMLPTLGIG. The Periplasmic segment spans residues 365–375; sequence DMNNLYKWLLN. The chain crosses the membrane as a helical span at residues 376–396; it reads LNSVVMPLRYLWVFVAFIAVV. The Cytoplasmic segment spans residues 397 to 414; the sequence is RLAQKYKPEYVFIRNKPL. A helical membrane pass occupies residues 415–435; it reads AMTVGIWCFAFTAFACLTGIF. Residues 436–448 are Periplasmic-facing; it reads PKMEAFTAEWTFQ. The chain crosses the membrane as a helical span at residues 449–469; that stretch reads LALNVATPFVLVGLGLIFPLL. At 470–476 the chain is on the cytoplasmic side; the sequence is ARKANSK.

This sequence belongs to the amino acid-polyamine-organocation (APC) superfamily.

The protein resides in the cell inner membrane. The chain is Inner membrane transporter YcaM (ycaM) from Escherichia coli (strain K12).